The chain runs to 247 residues: Protein GrpE (247 aa).

The segment covering Gln31–Val49 has biased composition (basic and acidic residues). Positions Gln31–His79 are disordered. Over residues Lys50 to Lys68 the composition is skewed to low complexity.

It belongs to the GrpE family. In terms of assembly, homodimer.

Its subcellular location is the cytoplasm. Participates actively in the response to hyperosmotic and heat shock by preventing the aggregation of stress-denatured proteins, in association with DnaK and GrpE. It is the nucleotide exchange factor for DnaK and may function as a thermosensor. Unfolded proteins bind initially to DnaJ; upon interaction with the DnaJ-bound protein, DnaK hydrolyzes its bound ATP, resulting in the formation of a stable complex. GrpE releases ADP from DnaK; ATP binding to DnaK triggers the release of the substrate protein, thus completing the reaction cycle. Several rounds of ATP-dependent interactions between DnaJ, DnaK and GrpE are required for fully efficient folding. This Onion yellows phytoplasma (strain OY-M) protein is Protein GrpE.